Here is a 189-residue protein sequence, read N- to C-terminus: MPKTRRRPRRSQRKRPPTPWPTSQGLDRVFFSDTQSTCLETVYKATGAPSLGDYVRPAYIVTPYWPPVQSIRSPGTPSMDALSAQLYSSLSLDSPPSPPREPLRPLRSLPRQSLIQPPTFHPPSSRPCANTPPSEMDTWNPPLGSTSQPCLFQTPDSGPKTCTPSGEAPLSACTSTSFPPPSPGPSCPM.

The segment covering 1–16 (MPKTRRRPRRSQRKRP) has biased composition (basic residues). A disordered region spans residues 1-27 (MPKTRRRPRRSQRKRPPTPWPTSQGLD). The Nuclear localization signal, and RNA-binding (RxRE) motif lies at 2 to 18 (PKTRRRPRRSQRKRPPT). The segment at 56 to 70 (RPAYIVTPYWPPVQS) is homomultimerization. S70 is modified (phosphoserine; by host). A Nuclear export signal motif is present at residues 82 to 93 (LSAQLYSSLSLD). The segment at 87 to 189 (YSSLSLDSPP…PPSPGPSCPM (103 aa)) is disordered. A compositionally biased stretch (low complexity) spans 105 to 114 (PLRSLPRQSL). Residues 123–131 (PSSRPCANT) form a homomultimerization region. Over residues 143 to 164 (LGSTSQPCLFQTPDSGPKTCTP) the composition is skewed to polar residues. T174 is modified (phosphothreonine; by host). S177 is modified (phosphoserine; by host). The span at 178-189 (FPPPSPGPSCPM) shows a compositional bias: pro residues.

This sequence belongs to the deltaretrovirus Rex protein family. In terms of assembly, homomultimer. Multimeric assembly is essential for activity and involves XPO1. Binds to human XPO1 and KPNB1. Interacts (via N-terminal nuclear localization signal) with human NPM1. Post-translationally, phosphorylated.

It is found in the host nucleus. The protein localises to the host nucleolus. The protein resides in the host cytoplasm. Functionally, rex escorts unspliced gag-pro-pol and singly spliced env mRNAs out of the nucleus of infected cells. These mRNAs carry a recognition sequence called Rex responsive element (RxRE or XRE) located at the 3' region of the long terminal repeat (LTR). This function is essential since most HTLV proteins are translated from unspliced or partially spliced pre-mRNAs that cannot exit the nucleus by the pathway used by fully processed cellular mRNAs. Rex itself is translated from a fully spliced mRNA that probably readily exits the nucleus. Rex's nuclear localization signal (NLS) binds directly to KPNB1/importin beta-1 without previous binding to KPNA1/importin alpha-1. KPNB1 binds to the GDP bound form of RAN (Ran-GDP) and targets Rex to the nucleus. In the nucleus, the conversion from Ran-GDP to Ran-GTP dissociates Rex from KPNB1 and allows Rex's binding to the RRE in viral pre-mRNAs. Rex multimerizes on the RRE via cooperative assembly. This multimerization is critical for its full biological activity, since it may shield the viral RNA from being spliced or down-regulated, and probably exposes Rex's nuclear export signal (NES) to the surface. Rex can then form a complex with XPO1/CRM1, RANBP3 and Ran-GTP, leading to nuclear export of the complex. Conversion from Ran-GTP to Ran-GDP mediates dissociation of the Rex/RRE/XPO1/RANBP3/RAN complex, so that Rex can return to the nucleus for a subsequent round of export. This Human T-cell leukemia virus 1 (isolate Caribbea HS-35 subtype A) (HTLV-1) protein is Protein Rex.